Reading from the N-terminus, the 272-residue chain is Hydroxyethylthiazole kinase (272 aa).

Met45 is a binding site for substrate. ATP contacts are provided by Arg121 and Thr168. Gly195 is a binding site for substrate.

This sequence belongs to the Thz kinase family. As to quaternary structure, homotrimer. Mg(2+) serves as cofactor.

The catalysed reaction is 5-(2-hydroxyethyl)-4-methylthiazole + ATP = 4-methyl-5-(2-phosphooxyethyl)-thiazole + ADP + H(+). The protein operates within cofactor biosynthesis; thiamine diphosphate biosynthesis; 4-methyl-5-(2-phosphoethyl)-thiazole from 5-(2-hydroxyethyl)-4-methylthiazole: step 1/1. In terms of biological role, catalyzes the phosphorylation of the hydroxyl group of 4-methyl-5-beta-hydroxyethylthiazole (THZ). The sequence is that of Hydroxyethylthiazole kinase from Bacillus subtilis (strain 168).